Reading from the N-terminus, the 28-residue chain is uncharacterized protein (28 aa).

Residues 5 to 27 traverse the membrane as a helical segment; that stretch reads SAFHACNIIFLPLVKCASATIML.

The protein resides in the membrane. This is an uncharacterized protein from Saccharomyces cerevisiae (strain ATCC 204508 / S288c) (Baker's yeast).